Here is a 113-residue protein sequence, read N- to C-terminus: Hydrogenase maturation factor HypA (113 aa).

Histidine 2 lines the Ni(2+) pocket. Cysteine 73, cysteine 76, cysteine 89, and cysteine 92 together coordinate Zn(2+).

This sequence belongs to the HypA/HybF family.

Involved in the maturation of [NiFe] hydrogenases. Required for nickel insertion into the metal center of the hydrogenase. The protein is Hydrogenase maturation factor HypA of Albidiferax ferrireducens (strain ATCC BAA-621 / DSM 15236 / T118) (Rhodoferax ferrireducens).